Consider the following 247-residue polypeptide: Small ribosomal subunit protein uS3 (247 aa).

The KH type-2 domain maps to 39 to 111 (IYDFFDKKVR…NISIQVIELK (73 aa)). The disordered stretch occupies residues 221–247 (EEMDLLNAPKDRRVRRGGERHASTKKN). Residues 236 to 247 (RGGERHASTKKN) are compositionally biased toward basic and acidic residues.

It belongs to the universal ribosomal protein uS3 family. In terms of assembly, part of the 30S ribosomal subunit. Forms a tight complex with proteins S10 and S14.

Functionally, binds the lower part of the 30S subunit head. Binds mRNA in the 70S ribosome, positioning it for translation. This is Small ribosomal subunit protein uS3 from Metamycoplasma arthritidis (strain 158L3-1) (Mycoplasma arthritidis).